Here is a 316-residue protein sequence, read N- to C-terminus: Olfactory receptor 51J1 (316 aa).

Residues Met1 to Ser31 are Extracellular-facing. A glycan (N-linked (GlcNAc...) asparagine) is linked at Asn5. The helical transmembrane segment at Val32–Ile52 threads the bilayer. At Arg53–Tyr63 the chain is on the cytoplasmic side. Residues Leu64–Val84 traverse the membrane as a helical segment. Over Leu85–Asp104 the chain is Extracellular. A disulfide bridge connects residues Cys100 and Cys191. Residues Val105–Pro125 form a helical membrane-spanning segment. Residues Leu126–Ser161 lie on the Cytoplasmic side of the membrane. The chain crosses the membrane as a helical span at residues Val162 to Leu182. At Ser183–Cys191 the chain is on the extracellular side. The chain crosses the membrane as a helical span at residues Gly192–Asp212. The Cytoplasmic segment spans residues Ser213–Thr242. A helical membrane pass occupies residues Cys243–Val263. The Extracellular portion of the chain corresponds to His264 to Gln275. Residues Ala276–Ile296 form a helical membrane-spanning segment. Residues Lys297–Val316 lie on the Cytoplasmic side of the membrane.

Belongs to the G-protein coupled receptor 1 family.

Its subcellular location is the cell membrane. Its function is as follows. Odorant receptor. The chain is Olfactory receptor 51J1 (OR51J1) from Homo sapiens (Human).